Reading from the N-terminus, the 432-residue chain is Trigger factor (432 aa).

The region spanning 161 to 246 (EDRVTIDFTG…LKKVEERELP (86 aa)) is the PPIase FKBP-type domain.

Belongs to the FKBP-type PPIase family. Tig subfamily.

The protein resides in the cytoplasm. The enzyme catalyses [protein]-peptidylproline (omega=180) = [protein]-peptidylproline (omega=0). Involved in protein export. Acts as a chaperone by maintaining the newly synthesized protein in an open conformation. Functions as a peptidyl-prolyl cis-trans isomerase. The chain is Trigger factor from Cronobacter sakazakii (strain ATCC BAA-894) (Enterobacter sakazakii).